Consider the following 220-residue polypeptide: Ribosomal RNA large subunit methyltransferase E (220 aa).

S-adenosyl-L-methionine is bound by residues G60, W62, D92, D108, and D133. Catalysis depends on K173, which acts as the Proton acceptor.

It belongs to the class I-like SAM-binding methyltransferase superfamily. RNA methyltransferase RlmE family.

The protein localises to the cytoplasm. The enzyme catalyses uridine(2552) in 23S rRNA + S-adenosyl-L-methionine = 2'-O-methyluridine(2552) in 23S rRNA + S-adenosyl-L-homocysteine + H(+). Its function is as follows. Specifically methylates the uridine in position 2552 of 23S rRNA at the 2'-O position of the ribose in the fully assembled 50S ribosomal subunit. The chain is Ribosomal RNA large subunit methyltransferase E from Burkholderia thailandensis (strain ATCC 700388 / DSM 13276 / CCUG 48851 / CIP 106301 / E264).